We begin with the raw amino-acid sequence, 459 residues long: 1,3-beta-glucanosyltransferase gas2 (459 aa).

Positions 1–19 (MVSFTKFTLQLLSASAAFA) are cleaved as a signal peptide. N-linked (GlcNAc...) asparagine glycans are attached at residues asparagine 34 and asparagine 68. A disulfide bridge links cysteine 69 with cysteine 98. (1,3-beta-D-glucosyl)n is bound at residue tyrosine 87. Asparagine 90, asparagine 104, and asparagine 146 each carry an N-linked (GlcNAc...) asparagine glycan. (1,3-beta-D-glucosyl)n contacts are provided by asparagine 155 and glutamate 156. Glutamate 156 (proton donor) is an active-site residue. Residue asparagine 160 is glycosylated (N-linked (GlcNAc...) asparagine). 2 residues coordinate (1,3-beta-D-glucosyl)n: aspartate 197 and arginine 202. 2 disulfides stabilise this stretch: cysteine 211–cysteine 350 and cysteine 235–cysteine 266. Asparagine 212, asparagine 218, and asparagine 254 each carry an N-linked (GlcNAc...) asparagine glycan. Residue glutamate 263 is the Nucleophile of the active site. Asparagine 284 carries an N-linked (GlcNAc...) asparagine glycan. Residue tyrosine 295 coordinates (1,3-beta-D-glucosyl)n. Residues asparagine 308, asparagine 334, asparagine 344, asparagine 354, and asparagine 370 are each glycosylated (N-linked (GlcNAc...) asparagine). 3 cysteine pairs are disulfide-bonded: cysteine 374-cysteine 427, cysteine 383-cysteine 449, and cysteine 402-cysteine 409. N-linked (GlcNAc...) asparagine glycosylation occurs at asparagine 423.

This sequence belongs to the glycosyl hydrolase 72 family.

The protein resides in the endoplasmic reticulum lumen. Its subcellular location is the secreted. Splits internally a 1,3-beta-glucan molecule and transfers the newly generated reducing end (the donor) to the non-reducing end of another 1,3-beta-glucan molecule (the acceptor) forming a 1,3-beta linkage, resulting in the elongation of 1,3-beta-glucan chains in the cell wall. In Schizosaccharomyces pombe (strain 972 / ATCC 24843) (Fission yeast), this protein is 1,3-beta-glucanosyltransferase gas2 (gas2).